Consider the following 236-residue polypeptide: Small ribosomal subunit protein uS3c (236 aa).

The KH type-2 domain occupies 47 to 127 (VRKYVRSSSR…KLNMTLSQVA (81 aa)).

It belongs to the universal ribosomal protein uS3 family. In terms of assembly, part of the 30S ribosomal subunit.

The protein localises to the plastid. It is found in the chloroplast. The sequence is that of Small ribosomal subunit protein uS3c (rps3) from Zygnema circumcarinatum (Green alga).